Reading from the N-terminus, the 105-residue chain is Iron-sulfur cluster assembly protein CyaY (105 aa).

The protein belongs to the frataxin family.

Functionally, involved in iron-sulfur (Fe-S) cluster assembly. May act as a regulator of Fe-S biogenesis. This Photobacterium profundum (strain SS9) protein is Iron-sulfur cluster assembly protein CyaY.